Here is a 33-residue protein sequence, read N- to C-terminus: Pardaxin P-2 (33 aa).

It belongs to the pardaxin family. In aqueous solution exists as a tetramer.

The protein localises to the secreted. Its subcellular location is the target cell membrane. Functionally, exhibits unusual shark repellent and surfactant properties. Forms voltage-dependent, ion-permeable channels in membranes. At high concentration causes cell membrane lysis. The chain is Pardaxin P-2 from Pardachirus pavoninus (Peacock sole).